The primary structure comprises 283 residues: MQILTDPRTLQQTCLRWRADGQHTVLVPTMGYYHSGHESLMSYARSVGDKVVVSLFVNPTQFGPGEDLAAYPRDLERDAALAEANGADILFTPQPADMFPAGHATWIEVPSLAGTLCGVSRPTHFRGVCTVVMKLFQLAMPRTAVFGQKDWQQLAIIRRMARDLNVPVDVVGRPIVREQDGLAMSSRNIYLSTEERAQAPNIHHGLALGRALVQGGERDAAAVAEAMRRYWRESLPLAQEDYISIVHPETLEPLARITDAALCAVAFRLGKARLIDNMLLAGE.

30–37 (MGYYHSGH) serves as a coordination point for ATP. The active-site Proton donor is His37. Residue Gln61 participates in (R)-pantoate binding. Gln61 serves as a coordination point for beta-alanine. 147–150 (GQKD) contributes to the ATP binding site. Residue Gln153 participates in (R)-pantoate binding. ATP-binding positions include Val176 and 184-187 (MSSR).

This sequence belongs to the pantothenate synthetase family. Homodimer.

The protein localises to the cytoplasm. The enzyme catalyses (R)-pantoate + beta-alanine + ATP = (R)-pantothenate + AMP + diphosphate + H(+). It participates in cofactor biosynthesis; (R)-pantothenate biosynthesis; (R)-pantothenate from (R)-pantoate and beta-alanine: step 1/1. Functionally, catalyzes the condensation of pantoate with beta-alanine in an ATP-dependent reaction via a pantoyl-adenylate intermediate. In Nitratidesulfovibrio vulgaris (strain DSM 19637 / Miyazaki F) (Desulfovibrio vulgaris), this protein is Pantothenate synthetase.